A 148-amino-acid chain; its full sequence is Putative pre-16S rRNA nuclease (148 aa).

The protein belongs to the YqgF nuclease family.

The protein resides in the cytoplasm. In terms of biological role, could be a nuclease involved in processing of the 5'-end of pre-16S rRNA. The sequence is that of Putative pre-16S rRNA nuclease from Chlamydia muridarum (strain MoPn / Nigg).